The chain runs to 154 residues: MGLSDGEWQLVLNVWGKVEADLAGHGQDILIRLFKGHPETLEKFDKFKHLKTEADMKASEDLKKHGNTVLTALGAILKKKGHHDAELKPLAQSHATKHKIPIKYLEFISEAIIHVLHSRHPAEFGADAQGAMNKALELFRKDIAAKYKELGFHG.

The region spanning 2 to 148 is the Globin domain; that stretch reads GLSDGEWQLV…FRKDIAAKYK (147 aa). Phosphoserine is present on serine 4. Position 65 (histidine 65) interacts with nitrite. Residue histidine 65 participates in O2 binding. Threonine 68 carries the post-translational modification Phosphothreonine. Residue histidine 94 coordinates heme b.

The protein belongs to the globin family. Monomeric.

It is found in the cytoplasm. The protein resides in the sarcoplasm. It catalyses the reaction Fe(III)-heme b-[protein] + nitric oxide + H2O = Fe(II)-heme b-[protein] + nitrite + 2 H(+). The enzyme catalyses H2O2 + AH2 = A + 2 H2O. Functionally, monomeric heme protein which primary function is to store oxygen and facilitate its diffusion within muscle tissues. Reversibly binds oxygen through a pentacoordinated heme iron and enables its timely and efficient release as needed during periods of heightened demand. Depending on the oxidative conditions of tissues and cells, and in addition to its ability to bind oxygen, it also has a nitrite reductase activity whereby it regulates the production of bioactive nitric oxide. Under stress conditions, like hypoxia and anoxia, it also protects cells against reactive oxygen species thanks to its pseudoperoxidase activity. This chain is Myoglobin (MB), found in Orcinus orca (Killer whale).